Reading from the N-terminus, the 501-residue chain is Acetylcholine receptor subunit beta (501 aa).

Residues 1–23 (MALGALLLLLGVLGTPLAPGARG) form the signal peptide. Residues 24–244 (SEAEGQLIKK…VIFYLIIRRK (221 aa)) lie on the Extracellular side of the membrane. A disulfide bond links Cys-151 and Cys-165. An N-linked (GlcNAc...) asparagine glycan is attached at Asn-164. 3 helical membrane passes run 245-269 (PLFYLVNVIAPCILITLLAIFVFYL), 277-295 (MGLSIFALLTLTVFLLLLA), and 311-332 (YLMFTMVLVTFSVILSVVVLNL). Residues 333–469 (HHRSPHTHQM…WQFVAMVVDR (137 aa)) lie on the Cytoplasmic side of the membrane. Positions 362-382 (RPKPERDQLPEPHHSLSPRSG) are disordered. The span at 363 to 375 (PKPERDQLPEPHH) shows a compositional bias: basic and acidic residues. The residue at position 390 (Tyr-390) is a Phosphotyrosine; by Tyr-kinases. The helical transmembrane segment at 470–488 (LFLWTFIVFTSVGTLVIFL) threads the bilayer.

The protein belongs to the ligand-gated ion channel (TC 1.A.9) family. Acetylcholine receptor (TC 1.A.9.1) subfamily. Beta-1/CHRNB1 sub-subfamily. In terms of assembly, pentamer of two alpha chains, and one each of the beta, delta, and gamma (in immature muscle) or epsilon (in mature muscle) chains. The muscle heteropentamer composed of alpha-1, beta-1, delta, epsilon subunits interacts with the alpha-conotoxin ImII.

It is found in the postsynaptic cell membrane. The protein resides in the cell membrane. It carries out the reaction K(+)(in) = K(+)(out). The enzyme catalyses Na(+)(in) = Na(+)(out). Its function is as follows. After binding acetylcholine, the AChR responds by an extensive change in conformation that affects all subunits and leads to opening of an ion-conducting channel across the plasma membrane. This chain is Acetylcholine receptor subunit beta (Chrnb1), found in Mus musculus (Mouse).